We begin with the raw amino-acid sequence, 125 residues long: Ribosome-binding factor A (125 aa).

It belongs to the RbfA family. Monomer. Binds 30S ribosomal subunits, but not 50S ribosomal subunits or 70S ribosomes.

It is found in the cytoplasm. One of several proteins that assist in the late maturation steps of the functional core of the 30S ribosomal subunit. Associates with free 30S ribosomal subunits (but not with 30S subunits that are part of 70S ribosomes or polysomes). Required for efficient processing of 16S rRNA. May interact with the 5'-terminal helix region of 16S rRNA. The chain is Ribosome-binding factor A from Carboxydothermus hydrogenoformans (strain ATCC BAA-161 / DSM 6008 / Z-2901).